An 88-amino-acid chain; its full sequence is MQVTDVRIRKITNEGRMKAIVSVTFDNCFVVHDIKIIEGQNGLFIAMPSRKTPEGEFKDIAHPINQEMRDMVQKAVIEKYEAVISAGE.

It belongs to the SpoVG family.

Could be involved in septation. The polypeptide is Putative septation protein SpoVG (Caldicellulosiruptor saccharolyticus (strain ATCC 43494 / DSM 8903 / Tp8T 6331)).